A 783-amino-acid polypeptide reads, in one-letter code: MDPKLLLCLPQGDELFNPLNTMFIQMACILVFSQLFYLLLKPCGQAGPVAQILAGIVLSPVLLSRIPKVKEFFLQKNAADYYSFFSFALRTSFMFLIGLEVDLHFMRRNFKKAAVITLSSFVVSGLLSFASLMLFIPLFGIKEDYFTFFLVLLVTLSNTASPVVVRSIADWKLNTCEIGRLTISCALFIELTNVVLYTIIMAFISGTIILELFLFLLATVALILINMVLAPWLPKRNPKEKYLSKAETLVFFIFLLIIGITIESYDVNSSVSVFAIGIMFPRQGKTHRTLIQRLSYPIHEFVLPVYFGYIGFRFSIIALTKRFYLGIVIIVIVTIAGKFIGVISACMYLKIPKKYWLFLPTILSVKGHVGLLLLDSNYSEKKWWTTTIHDMMVAALVITTLVSGVLASFLLKTREKDFAYEKTSLESHNTNEELRILSCAYGVRHARGAISLVSALSGSRGASDPFTPLLMHLVPLPKKRKSELMYHEHDEDGGNANGDDEFGTNEGLEINDSIDSFAKDSKILIQQVKLVTQMLNMHEEICNATEDLRVSIVFLPFHKHQRIDGKTTNDGELFRQMNRNVLRHGPCSIGIFVDRNITGFQQPHGFDSVQHVATLFFGGPDDREALALCRWLANNTLIHLTVIQFVSEESKAETPVGNAMTRDNNEVFMEVLGRNQTEQETDRSFLEEFYNRFVTTGQVGFIEKLVSNGPHTLTILREIGEMYSLFVVGKSTGDCPMTVRMKDWEECPELGTVGDFLASSLDVNASVLVVQRQRHSHDSFIDD.

12 helical membrane passes run Leu19 to Leu39, Cys43 to Leu63, Tyr81 to Val101, Phe121 to Ile141, Tyr145 to Val165, Ala186 to Gly206, Ile208 to Val228, Tyr242 to Ile262, Glu300 to Thr320, Phe323 to Ile343, Tyr355 to Asp375, and Met391 to Leu411.

Belongs to the monovalent cation:proton antiporter 2 (CPA2) transporter (TC 2.A.37) family. CHX (TC 2.A.37.4) subfamily. Specifically expressed in pollen.

It localises to the membrane. In terms of biological role, may operate as a cation/H(+) antiporter. The chain is Cation/H(+) antiporter 2 (CHX2) from Arabidopsis thaliana (Mouse-ear cress).